The primary structure comprises 873 residues: Zinc fingers and homeoboxes protein 1 (873 aa).

The segment at 1–63 (MASRRKSTTP…ESVDSDNQQN (63 aa)) is disordered. Residues 18–30 (QDPDLELISDLEE) show a composition bias toward acidic residues. Residue Thr-36 is modified to Phosphothreonine. Phosphoserine occurs at positions 45, 47, and 48. C2H2-type zinc fingers lie at residues 70 to 93 (YECK…DSEH) and 102 to 125 (YVCV…LKYH). Lys-159 is covalently cross-linked (Glycyl lysine isopeptide (Lys-Gly) (interchain with G-Cter in SUMO2)). Positions 198–247 (VHHNSAEGTSEEKENGVKASREENAENTSSSASESNTSTSTVNQVHPSPA) are disordered. The residue at position 202 (Ser-202) is a Phosphoserine. Positions 207 to 221 (SEEKENGVKASREEN) are enriched in basic and acidic residues. Low complexity predominate over residues 223 to 238 (ENTSSSASESNTSTST). The segment at 272 to 432 (NSNLVPKVLI…QTNVQKSQVP (161 aa)) is required for dimerization. The required for interaction with NFYA stretch occupies residues 272 to 564 (NSNLVPKVLI…SQPKQSWNPF (293 aa)). A DNA-binding region (homeobox 1) is located at residues 284–346 (NSIPTYNAAL…LKHGVSWTPE (63 aa)). Positions 430–455 (QVPAAQPAAETKPATAAVPSSPSVRP) are disordered. Residues Lys-441 and Lys-485 each participate in a glycyl lysine isopeptide (Lys-Gly) (interchain with G-Cter in SUMO2) cross-link. A DNA-binding region (homeobox 2) is located at residues 464-526 (SFGIRAKKTK…YNQRNSKSNQ (63 aa)). Disordered stretches follow at residues 540-568 (IDSS…PDFA), 627-664 (DEKV…TGKI), and 731-767 (SSSL…KRMN). Low complexity predominate over residues 551-560 (AAAASQPKQS). Residues 569–631 (PQKFKEKTAE…TKALKDEKVE (63 aa)) constitute a DNA-binding region (homeobox 3). A Glycyl lysine isopeptide (Lys-Gly) (interchain with G-Cter in SUMO2) cross-link involves residue Lys-629. Ser-648 is modified (phosphoserine). The homeobox 4 DNA-binding region spans 660–722 (GTGKICKKTP…YAWKNGNLKW (63 aa)). The segment at 734–768 (LNGLSSLRKRGRGRPKGRGRGRPRGRPRGGKRMNT) is required for nuclear localization. Basic residues predominate over residues 740-764 (LRKRGRGRPKGRGRGRPRGRPRGGK). Ser-774 is modified (phosphoserine). The segment at residues 777 to 832 (KFKTGTAILKDYYLKHKFLNEQDLDELVNRSHMGYEQVREWFAERQRRSELGIELF) is a DNA-binding region (homeobox 5). The interval 829-873 (IELFEENEEEDEVIDDQEEDEEETDDSDTWEPPRHVKRKLSKSDD) is disordered. The segment covering 831–857 (LFEENEEEDEVIDDQEEDEEETDDSDT) has biased composition (acidic residues). The segment at 831–873 (LFEENEEEDEVIDDQEEDEEETDDSDTWEPPRHVKRKLSKSDD) is required for repressor activity. Residues 863-873 (HVKRKLSKSDD) show a composition bias toward basic residues.

The protein belongs to the ZHX family. As to quaternary structure, forms homodimers. Heterodimer (via HD1 domain) with ZHX2 (via HD1 domain). Also forms a heterodimer with ZHX3 which is a prerequisite for repressor activity. Interacts with ATF7IP and NFYA. Interacts (via homeobox domains) with DNMT3B (via PWWP domain). As to expression, ubiquitously expressed.

Its subcellular location is the nucleus. Functionally, acts as a transcriptional repressor. Increases DNMT3B-mediated repressive transcriptional activity when DNMT3B is tethered to DNA. May link molecule between DNMT3B and other co-repressor proteins. In Rattus norvegicus (Rat), this protein is Zinc fingers and homeoboxes protein 1 (Zhx1).